The primary structure comprises 245 residues: Orotidine 5'-phosphate decarboxylase (245 aa).

Residues Asp-22, Lys-44, 71–80 (DLKFHDIPNT), Thr-131, Arg-192, Gln-201, Gly-221, and Arg-222 each bind substrate. The Proton donor role is filled by Lys-73.

The protein belongs to the OMP decarboxylase family. Type 1 subfamily. In terms of assembly, homodimer.

The enzyme catalyses orotidine 5'-phosphate + H(+) = UMP + CO2. The protein operates within pyrimidine metabolism; UMP biosynthesis via de novo pathway; UMP from orotate: step 2/2. Its function is as follows. Catalyzes the decarboxylation of orotidine 5'-monophosphate (OMP) to uridine 5'-monophosphate (UMP). This chain is Orotidine 5'-phosphate decarboxylase, found in Shigella boydii serotype 18 (strain CDC 3083-94 / BS512).